The chain runs to 208 residues: FMN-dependent NADH:quinone oxidoreductase (208 aa).

Residues 17 to 19, 99 to 102, and 143 to 146 contribute to the FMN site; these read SNS, MWNL, and SRGG.

The protein belongs to the azoreductase type 1 family. In terms of assembly, homodimer. FMN is required as a cofactor.

The enzyme catalyses 2 a quinone + NADH + H(+) = 2 a 1,4-benzosemiquinone + NAD(+). The catalysed reaction is N,N-dimethyl-1,4-phenylenediamine + anthranilate + 2 NAD(+) = 2-(4-dimethylaminophenyl)diazenylbenzoate + 2 NADH + 2 H(+). In terms of biological role, quinone reductase that provides resistance to thiol-specific stress caused by electrophilic quinones. Its function is as follows. Also exhibits azoreductase activity. Catalyzes the reductive cleavage of the azo bond in aromatic azo compounds to the corresponding amines. The sequence is that of FMN-dependent NADH:quinone oxidoreductase from Staphylococcus aureus (strain MRSA252).